Here is a 120-residue protein sequence, read N- to C-terminus: Proteinase inhibitor (120 aa).

The N-terminal stretch at 1–19 is a signal peptide; it reads MKQLIIATLLSALSGGCMA. Cysteines 43 and 65 form a disulfide.

It belongs to the protease inhibitor I38 family. As to quaternary structure, monomer.

It localises to the periplasm. Functionally, inhibitor of the extracellular proteases A, B, and C of E.chrysanthemi and the S.marcescens 50 kDa extracellular protease. It forms a non-covalent bond with the proteases and may prevent autocatalytic cleavage of the proteases zymogen in the periplasm. This chain is Proteinase inhibitor (inh), found in Dickeya chrysanthemi (Pectobacterium chrysanthemi).